Consider the following 81-residue polypeptide: MLRQILSQAKKHPSLIPLFVFIGTGASGATLYLLRLALFNPDVCWDRNNPEPWNKLGPNDQYKFYSVNVDYSKLKKERPDF.

Topologically, residues 1–14 (MLRQILSQAKKHPS) are mitochondrial matrix. Lys-10 carries the post-translational modification N6-acetyllysine. Residues 15 to 37 (LIPLFVFIGTGASGATLYLLRLA) traverse the membrane as a helical segment. Topologically, residues 38–81 (LFNPDVCWDRNNPEPWNKLGPNDQYKFYSVNVDYSKLKKERPDF) are mitochondrial intermembrane. A Phosphoserine modification is found at Ser-66.

It belongs to the complex IV NDUFA4 subunit family. In terms of assembly, component of the cytochrome c oxidase (complex IV, CIV), a multisubunit enzyme composed of 14 subunits. The complex is composed of a catalytic core of 3 subunits MT-CO1, MT-CO2 and MT-CO3, encoded in the mitochondrial DNA, and 11 supernumerary subunits COX4I, COX5A, COX5B, COX6A, COX6B, COX6C, COX7A, COX7B, COX7C, COX8 and NDUFA4, which are encoded in the nuclear genome. The complex exists as a monomer or a dimer and forms supercomplexes (SCs) in the inner mitochondrial membrane with NADH-ubiquinone oxidoreductase (complex I, CI) and ubiquinol-cytochrome c oxidoreductase (cytochrome b-c1 complex, complex III, CIII), resulting in different assemblies (supercomplex SCI(1)III(2)IV(1) and megacomplex MCI(2)III(2)IV(2)). Interacts with RAB5IF. Interacts with FLVCR2; this interaction occurs in the absence of heme and is disrupted upon heme binding.

It is found in the mitochondrion inner membrane. In terms of biological role, component of the cytochrome c oxidase, the last enzyme in the mitochondrial electron transport chain which drives oxidative phosphorylation. The respiratory chain contains 3 multisubunit complexes succinate dehydrogenase (complex II, CII), ubiquinol-cytochrome c oxidoreductase (cytochrome b-c1 complex, complex III, CIII) and cytochrome c oxidase (complex IV, CIV), that cooperate to transfer electrons derived from NADH and succinate to molecular oxygen, creating an electrochemical gradient over the inner membrane that drives transmembrane transport and the ATP synthase. Cytochrome c oxidase is the component of the respiratory chain that catalyzes the reduction of oxygen to water. Electrons originating from reduced cytochrome c in the intermembrane space (IMS) are transferred via the dinuclear copper A center (CU(A)) of subunit 2 and heme A of subunit 1 to the active site in subunit 1, a binuclear center (BNC) formed by heme A3 and copper B (CU(B)). The BNC reduces molecular oxygen to 2 water molecules unsing 4 electrons from cytochrome c in the IMS and 4 protons from the mitochondrial matrix. NDUFA4 is required for complex IV maintenance. In Pongo pygmaeus (Bornean orangutan), this protein is Cytochrome c oxidase subunit NDUFA4 (NDUFA4).